The chain runs to 954 residues: Alpha-xylosidase BoGH31A (954 aa).

The first 20 residues, 1-20 (MIMNMKNIFYCLLPGLLLGA), serve as a signal peptide directing secretion. Residue Cys21 is the site of N-palmitoyl cysteine attachment. A lipid anchor (S-diacylglycerol cysteine) is attached at Cys21. Residues 227 to 366 (TGQEGALTGT…NPEEQGKQSW (140 aa)) form the PA14 domain. Catalysis depends on residues Asp553 and Glu556. Catalysis depends on Asp630, which acts as the Proton donor.

The protein belongs to the glycosyl hydrolase 31 family.

It is found in the cell inner membrane. It carries out the reaction Hydrolysis of terminal, non-reducing alpha-D-xylose residues with release of alpha-D-xylose.. Its pathway is glucan metabolism; xyloglucan degradation. Functionally, catalyzes the liberation of alpha-xylose from the non-reducing terminal glucose of xyloglucan oligosaccharides in xyloglucan degradation, converting the 'X' to 'G' units. This is Alpha-xylosidase BoGH31A from Bacteroides ovatus (strain ATCC 8483 / DSM 1896 / JCM 5824 / BCRC 10623 / CCUG 4943 / NCTC 11153).